The following is a 150-amino-acid chain: MNESIDINQIFTLLPHRYPFILVDRVIDYKVMEYLIAIKNVTINENFFTGHFPGNPIMPGVLMLEALAQACAILASLSRQPKEGHEFLHYFAGIDNARFKQVVTPGDQLRLEVRLAGQKRDFWRMHGEAYIGDKLACSADLLSAAKEIKK.

H51 is an active-site residue.

Belongs to the thioester dehydratase family. FabZ subfamily.

Its subcellular location is the cytoplasm. It carries out the reaction a (3R)-hydroxyacyl-[ACP] = a (2E)-enoyl-[ACP] + H2O. Involved in unsaturated fatty acids biosynthesis. Catalyzes the dehydration of short chain beta-hydroxyacyl-ACPs and long chain saturated and unsaturated beta-hydroxyacyl-ACPs. This is 3-hydroxyacyl-[acyl-carrier-protein] dehydratase FabZ from Legionella pneumophila subsp. pneumophila (strain Philadelphia 1 / ATCC 33152 / DSM 7513).